The chain runs to 306 residues: Protein-L-isoaspartate O-methyltransferase 2 (306 aa).

A disordered region spans residues 1–82 (MSTTPPRNKF…ASAATAGGGG (82 aa)). Pro residues predominate over residues 38-48 (PAAPTPAPAKP). The span at 54-77 (PRTAAPAPAPVPASAVEQRASAAT) shows a compositional bias: low complexity. Serine 142 is a catalytic residue.

It belongs to the methyltransferase superfamily. L-isoaspartyl/D-aspartyl protein methyltransferase family.

It localises to the cytoplasm. The enzyme catalyses [protein]-L-isoaspartate + S-adenosyl-L-methionine = [protein]-L-isoaspartate alpha-methyl ester + S-adenosyl-L-homocysteine. In terms of biological role, catalyzes the methyl esterification of L-isoaspartyl residues in peptides and proteins that result from spontaneous decomposition of normal L-aspartyl and L-asparaginyl residues. It plays a role in the repair and/or degradation of damaged proteins. The chain is Protein-L-isoaspartate O-methyltransferase 2 from Cupriavidus necator (strain ATCC 17699 / DSM 428 / KCTC 22496 / NCIMB 10442 / H16 / Stanier 337) (Ralstonia eutropha).